Reading from the N-terminus, the 279-residue chain is Alcohol dehydrogenase-related 31 kDa protein (279 aa).

An NAD(+)-binding site is contributed by 11–34 (YVADCGGIALETSKVLMTKNIAKL). Ser-139 lines the substrate pocket. Tyr-152 functions as the Proton acceptor in the catalytic mechanism.

Belongs to the short-chain dehydrogenases/reductases (SDR) family.

The polypeptide is Alcohol dehydrogenase-related 31 kDa protein (Adhr) (Drosophila guanche (Fruit fly)).